The following is a 466-amino-acid chain: A-type ATP synthase subunit B (466 aa).

It belongs to the ATPase alpha/beta chains family. Has multiple subunits with at least A(3), B(3), C, D, E, F, H, I and proteolipid K(x).

Its subcellular location is the cell membrane. In terms of biological role, component of the A-type ATP synthase that produces ATP from ADP in the presence of a proton gradient across the membrane. The B chain is a regulatory subunit. This chain is A-type ATP synthase subunit B, found in Metallosphaera sedula (strain ATCC 51363 / DSM 5348 / JCM 9185 / NBRC 15509 / TH2).